Here is a 289-residue protein sequence, read N- to C-terminus: Bidirectional sugar transporter SWEET10 (289 aa).

Residues 1–5 (MAISQ) lie on the Extracellular side of the membrane. A helical membrane pass occupies residues 6 to 26 (AVLATVFGILGNIISFFVCLA). The 86-residue stretch at 11 to 96 (VFGILGNIIS…SLFFFYAPKK (86 aa)) folds into the MtN3/slv 1 domain. Over 27–43 (PIPTFVRIYKRKSSEGY) the chain is Cytoplasmic. Residues 44 to 64 (QSIPYVISLFSAMLWMYYAMI) form a helical membrane-spanning segment. Residues 65 to 70 (KKDAMM) are Extracellular-facing. The helical transmembrane segment at 71-91 (LITINSFAFVVQIVYISLFFF) threads the bilayer. At 92 to 103 (YAPKKEKTLTVK) the chain is on the cytoplasmic side. Residues 104–124 (FVLFVDVLGFGAIFVLTYFII) traverse the membrane as a helical segment. Over 125–131 (HANKRVQ) the chain is Extracellular. One can recognise a MtN3/slv 2 domain in the interval 131–214 (QVLGYICMVF…QMILFLIYKK (84 aa)). The chain crosses the membrane as a helical span at residues 132–152 (VLGYICMVFALSVFVAPLGII). Residues 153–165 (RKVIKTKSAEFMP) lie on the Cytoplasmic side of the membrane. A helical membrane pass occupies residues 166-186 (FGLSFFLTLSAVMWFFYGLLL). Residues 187 to 190 (KDMN) lie on the Extracellular side of the membrane. The chain crosses the membrane as a helical span at residues 191–211 (IALPNVLGFIFGVLQMILFLI). Topologically, residues 212 to 289 (YKKPGTKVLE…EKEVFLISKN (78 aa)) are cytoplasmic.

The protein belongs to the SWEET sugar transporter family. As to quaternary structure, forms heterooligomers with SWEET8.

The protein localises to the cell membrane. Its function is as follows. Mediates both low-affinity uptake and efflux of sugar across the plasma membrane. The sequence is that of Bidirectional sugar transporter SWEET10 from Arabidopsis thaliana (Mouse-ear cress).